Here is a 25-residue protein sequence, read N- to C-terminus: Caerin-1.4 (25 aa).

L25 carries the leucine amide modification.

The protein belongs to the frog skin active peptide (FSAP) family. Caerin subfamily. As to expression, expressed by the skin parotoid and/or rostral glands.

The protein localises to the secreted. Its function is as follows. Antibacterial peptide, that adopts an alpha helical conformation which can disrupt bacterial membranes. Each caerin displays a different antimicrobial specificity. This chain is Caerin-1.4, found in Ranoidea caerulea (Green tree frog).